The following is a 315-amino-acid chain: Gamma-hemolysin component C (315 aa).

The signal sequence occupies residues 1–29 (MLKNKILATTLSVSLLAPLANPLLENAKA).

The protein belongs to the aerolysin family. In terms of assembly, toxicity requires sequential binding and synergistic association of a class S and a class F component which form heterooligomeric complexes. HlgC (class S) associates with HlgB (class F) thus forming an CB toxin.

Its function is as follows. Toxin that seems to act by forming pores in the membrane of the cell. Has a hemolytic and a leucotoxic activity. The polypeptide is Gamma-hemolysin component C (hlgC) (Staphylococcus aureus (strain MRSA252)).